Consider the following 457-residue polypeptide: Glucuronide carrier protein homolog (457 aa).

Residues 1 to 11 (MNQQLSWRTIV) are Cytoplasmic-facing. A helical transmembrane segment spans residues 12–34 (GYSLGDVANNFAFAMGALFLLSY). The Periplasmic segment spans residues 35–37 (YTD). A helical membrane pass occupies residues 38 to 60 (VAGVGAAAAGTMLLLVRVFDAFA). Topologically, residues 61–79 (DVFAGRVVDSVNTRWGKFR) are cytoplasmic. The chain crosses the membrane as a helical span at residues 80-100 (PFLLFGTAPLMIFSVLVFWVL). The Periplasmic segment spans residues 101 to 108 (TDWSHGSK). Residues 109–129 (VVYAYLTYMGLGLCYSLVNIP) form a helical membrane-spanning segment. The Cytoplasmic portion of the chain corresponds to 130–146 (YGSLATAMTQQPQSRAR). The chain crosses the membrane as a helical span at residues 147–167 (LGAARGIAASLTFVCLAFLIG). At 168–180 (PSIKNSSPEEMVS) the chain is on the periplasmic side. A helical transmembrane segment spans residues 181–201 (VYHFWTIVLAIAGMVLYFICF). Topologically, residues 202–228 (KSTRENVVRIVAQPSLNISLQTLKRNR) are cytoplasmic. Residues 229-249 (PLFMLCIGALCVLISTFAVSA) traverse the membrane as a helical segment. The Periplasmic portion of the chain corresponds to 250–263 (SSLFYVRYVLNDTG). A helical membrane pass occupies residues 264–284 (LFTVLVLVQNLVGTVASAPLV). The Cytoplasmic portion of the chain corresponds to 285–296 (PGMVARIGKKNT). Residues 297–316 (FLIGALLGTCGYLLFFWVSV) traverse the membrane as a helical segment. Residues 317 to 320 (WSLP) are Periplasmic-facing. The helical transmembrane segment at 321–343 (VALVALAIASIGQGVTMTVMWAL) threads the bilayer. At 344-372 (EADTVEYGEYLTGVRIEGLTYSLFSFTRK) the chain is on the cytoplasmic side. Residues 373–393 (CGQAIGGSIPAFILGLSGYIA) traverse the membrane as a helical segment. The Periplasmic portion of the chain corresponds to 394-408 (NQVQTPEVIMGIRTS). A helical transmembrane segment spans residues 409 to 429 (IALVPCGFMLLAFVIIWFYPL). Residues 430-457 (TDKKFKEIVVEIDNRKKVQQQLISDITN) are Cytoplasmic-facing.

Belongs to the sodium:galactoside symporter (TC 2.A.2) family.

It is found in the cell inner membrane. The sequence is that of Glucuronide carrier protein homolog (uidB) from Escherichia coli (strain K12).